The primary structure comprises 31 residues: Conotoxin pc6d (31 aa).

3 disulfides stabilise this stretch: Cys-2–Cys-20, Cys-9–Cys-25, and Cys-19–Cys-29.

This sequence belongs to the conotoxin O1 superfamily. Expressed by the venom duct.

It localises to the secreted. The protein is Conotoxin pc6d of Conus pictus (Cone snail).